Consider the following 91-residue polypeptide: MSITTERKQQLIKEYAITENDTGSSAVQCAILTERINNLTEHFKSNHKDHTSRRGLLILVGRRRRLLNYIKKNNVSKYLDLISKLGIRKIK.

Belongs to the universal ribosomal protein uS15 family. Part of the 30S ribosomal subunit. Forms a bridge to the 50S subunit in the 70S ribosome, contacting the 23S rRNA.

In terms of biological role, one of the primary rRNA binding proteins, it binds directly to 16S rRNA where it helps nucleate assembly of the platform of the 30S subunit by binding and bridging several RNA helices of the 16S rRNA. Functionally, forms an intersubunit bridge (bridge B4) with the 23S rRNA of the 50S subunit in the ribosome. The protein is Small ribosomal subunit protein uS15 of Rickettsia africae (strain ESF-5).